The primary structure comprises 1220 residues: Myosin-2 (1220 aa).

Positions 1 to 12 (MMLSASPNTLAK) are enriched in polar residues. 2 disordered regions span residues 1-54 (MMLS…ARRS) and 68-95 (QNGS…RKEK). Positions 20-33 (ESLRQKDECDRPKD) are enriched in basic and acidic residues. The span at 40 to 54 (SRPNSRARLPSARRS) shows a compositional bias: low complexity. Residues 82-95 (ESERKEEGVKRKEK) are compositionally biased toward basic and acidic residues. Residues 160 to 209 (KKKLRVWCRVSNGQWQLGKIQSTSADTSLVMLSTANVVKVSTEELFPANP) enclose the Myosin N-terminal SH3-like domain. Residues 213-879 (EGVEDLIQLS…QIGIFEDRRK (667 aa)) enclose the Myosin motor domain. ATP is bound by residues 304 to 311 (GESGAGKT) and 353 to 361 (NANSSRFGK). Actin-binding stretches follow at residues 638 to 672 (LIEK…KQHL) and 759 to 781 (LFKL…KPNS). 3 IQ domains span residues 881 to 910 (VLQG…VTLV), 904 to 933 (MRKV…FHAD), and 942 to 971 (ELSA…QKEL). Disordered regions lie at residues 968-1007 (QKEL…MSDL) and 1075-1118 (SITG…NGNT). Composition is skewed to polar residues over residues 997–1006 (PQVQPTSMSD) and 1098–1118 (TMST…NGNT). Residues 1003-1071 (SMSDLQKRIL…MSLAAARKSL (69 aa)) are a coiled coil.

It belongs to the TRAFAC class myosin-kinesin ATPase superfamily. Myosin family. Plant myosin class VIII subfamily. Homodimer. As to expression, expressed in flowers, leaves and roots.

It localises to the cell junction. The protein resides in the plasmodesma. The protein localises to the endosome. Its function is as follows. Myosin heavy chain that is required for the cell cycle-regulated transport of various organelles and proteins for their segregation. Functions by binding with its tail domain to receptor proteins on organelles and exerting force with its N-terminal motor domain against actin filaments, thereby transporting its cargo along polarized actin cables. Involved in endocytosis via its action in endosomal trafficking. The protein is Myosin-2 (VIII-2) of Arabidopsis thaliana (Mouse-ear cress).